The following is a 265-amino-acid chain: Proteasome subunit alpha (265 aa).

Residues 236-265 form a disordered region; it reads EKDSKGSKGAQNPKGARDSKNSKSYGESTD.

It belongs to the peptidase T1A family. The 20S proteasome core is composed of 14 alpha and 14 beta subunits that assemble into four stacked heptameric rings, resulting in a barrel-shaped structure. The two inner rings, each composed of seven catalytic beta subunits, are sandwiched by two outer rings, each composed of seven alpha subunits. The catalytic chamber with the active sites is on the inside of the barrel. Has a gated structure, the ends of the cylinder being occluded by the N-termini of the alpha-subunits. Is capped by the proteasome-associated ATPase, ARC.

It localises to the cytoplasm. It participates in protein degradation; proteasomal Pup-dependent pathway. Its activity is regulated as follows. The formation of the proteasomal ATPase ARC-20S proteasome complex, likely via the docking of the C-termini of ARC into the intersubunit pockets in the alpha-rings, may trigger opening of the gate for substrate entry. Interconversion between the open-gate and close-gate conformations leads to a dynamic regulation of the 20S proteasome proteolysis activity. Its function is as follows. Component of the proteasome core, a large protease complex with broad specificity involved in protein degradation. This Mycobacterium leprae (strain Br4923) protein is Proteasome subunit alpha.